A 622-amino-acid chain; its full sequence is Elongation factor 4 (622 aa).

In terms of domain architecture, tr-type G spans 17–198 (ELLRNFCIIA…QIVRQIPAPV (182 aa)). GTP is bound by residues 29–34 (DHGKST) and 145–148 (NKID).

It belongs to the TRAFAC class translation factor GTPase superfamily. Classic translation factor GTPase family. LepA subfamily.

The protein resides in the cell membrane. It carries out the reaction GTP + H2O = GDP + phosphate + H(+). In terms of biological role, required for accurate and efficient protein synthesis under certain stress conditions. May act as a fidelity factor of the translation reaction, by catalyzing a one-codon backward translocation of tRNAs on improperly translocated ribosomes. Back-translocation proceeds from a post-translocation (POST) complex to a pre-translocation (PRE) complex, thus giving elongation factor G a second chance to translocate the tRNAs correctly. Binds to ribosomes in a GTP-dependent manner. The polypeptide is Elongation factor 4 (Kineococcus radiotolerans (strain ATCC BAA-149 / DSM 14245 / SRS30216)).